Here is a 229-residue protein sequence, read N- to C-terminus: MYDISGWKHVFKLDPNKELSEEHLEMICESGTDAVIVGGSDGVTIDNVLHMLVSIRRYAVPCVLEVSDVEAITPGFDFYYIPSVLNSRKVEWVTGVHHEALKEFGDIMDWDEIFMEGYCVLNPEAKVAQLTDAKCDVTEDDVIAYARLADKLLRLPIFYLEYSGTYGDVELVKNVKAQLKQAKLYYGGGISNAEQAKEMAQHADTVVVGNIIYDDIKAALKTVKAVKGE.

Lys12 provides a ligand contact to sn-glycerol 1-phosphate. The Mg(2+) site is built by Asp14 and Ser40. Sn-glycerol 1-phosphate-binding positions include 159-164 (YLEYSG), Gly189, and 209-210 (GN).

It belongs to the GGGP/HepGP synthase family. Group I subfamily. Homodimer. The cofactor is Mg(2+).

It catalyses the reaction sn-glycerol 1-phosphate + all-trans-heptaprenyl diphosphate = 3-heptaprenyl-sn-glycero-1-phosphate + diphosphate. The protein operates within membrane lipid metabolism; glycerophospholipid metabolism. Functionally, prenyltransferase that catalyzes in vivo the transfer of the heptaprenyl moiety of heptaprenyl pyrophosphate (HepPP; 35 carbon atoms) to the C3 hydroxyl of sn-glycerol-1-phosphate (G1P), producing heptaprenylglyceryl phosphate (HepGP). This reaction is an ether-bond-formation step in the biosynthesis of archaea-type G1P-based membrane lipids found in Bacillales. In Bacillus cereus (strain ATCC 10987 / NRS 248), this protein is Heptaprenylglyceryl phosphate synthase.